The sequence spans 226 residues: Thioredoxin domain-containing protein 9 (226 aa).

Positions 74–180 (REIPSERDFF…TTETLEWRLG (107 aa)) constitute a Thioredoxin domain. Residues Ser188, Ser221, and Ser223 each carry the phosphoserine modification.

Forms ternary complexes with the chaperonin TCP1 complex, spanning the cylindrical chaperonin cavity and contacting at least 2 subunits.

The protein localises to the cytoplasm. Its subcellular location is the nucleus. The protein resides in the cytoskeleton. It is found in the microtubule organizing center. It localises to the centrosome. The protein localises to the midbody. Significantly diminishes the chaperonin TCP1 complex ATPase activity, thus negatively impacts protein folding, including that of actin or tubulin. The sequence is that of Thioredoxin domain-containing protein 9 (TXNDC9) from Homo sapiens (Human).